The sequence spans 314 residues: 4-hydroxy-3-methylbut-2-enyl diphosphate reductase (314 aa).

Cys12 serves as a coordination point for [4Fe-4S] cluster. His41 and His74 together coordinate (2E)-4-hydroxy-3-methylbut-2-enyl diphosphate. His41 and His74 together coordinate dimethylallyl diphosphate. Residues His41 and His74 each contribute to the isopentenyl diphosphate site. Cys96 is a [4Fe-4S] cluster binding site. His124 is a (2E)-4-hydroxy-3-methylbut-2-enyl diphosphate binding site. His124 is a binding site for dimethylallyl diphosphate. His124 lines the isopentenyl diphosphate pocket. The active-site Proton donor is Glu126. Thr167 contacts (2E)-4-hydroxy-3-methylbut-2-enyl diphosphate. [4Fe-4S] cluster is bound at residue Cys197. (2E)-4-hydroxy-3-methylbut-2-enyl diphosphate-binding residues include Ser225, Ser226, Asn227, and Ser269. Dimethylallyl diphosphate contacts are provided by Ser225, Ser226, Asn227, and Ser269. Isopentenyl diphosphate is bound by residues Ser225, Ser226, Asn227, and Ser269.

Belongs to the IspH family. [4Fe-4S] cluster is required as a cofactor.

It carries out the reaction isopentenyl diphosphate + 2 oxidized [2Fe-2S]-[ferredoxin] + H2O = (2E)-4-hydroxy-3-methylbut-2-enyl diphosphate + 2 reduced [2Fe-2S]-[ferredoxin] + 2 H(+). It catalyses the reaction dimethylallyl diphosphate + 2 oxidized [2Fe-2S]-[ferredoxin] + H2O = (2E)-4-hydroxy-3-methylbut-2-enyl diphosphate + 2 reduced [2Fe-2S]-[ferredoxin] + 2 H(+). The protein operates within isoprenoid biosynthesis; dimethylallyl diphosphate biosynthesis; dimethylallyl diphosphate from (2E)-4-hydroxy-3-methylbutenyl diphosphate: step 1/1. It functions in the pathway isoprenoid biosynthesis; isopentenyl diphosphate biosynthesis via DXP pathway; isopentenyl diphosphate from 1-deoxy-D-xylulose 5-phosphate: step 6/6. In terms of biological role, catalyzes the conversion of 1-hydroxy-2-methyl-2-(E)-butenyl 4-diphosphate (HMBPP) into a mixture of isopentenyl diphosphate (IPP) and dimethylallyl diphosphate (DMAPP). Acts in the terminal step of the DOXP/MEP pathway for isoprenoid precursor biosynthesis. The protein is 4-hydroxy-3-methylbut-2-enyl diphosphate reductase of Haemophilus ducreyi (strain 35000HP / ATCC 700724).